A 292-amino-acid chain; its full sequence is MTTAITPDKKKLVSPKPTKTTSDKSKTKPRRSSKTSKKRKSKKGLFGCCAKKRKTKRSKKSAKRTKRSAPKKAPKKAPMKAPSKPAAIPQQAQASLQKPIQSGIVDADAKAKTVVPRPPTPIPPTGVKPEPAPRSEPLYQPRSVSSTTPRTSATTGTTEQMVTAPATLPPPSAESKHLPQDPPGDASSPRVQRQYTAEKYSKEDQDDDDQKDLRKSVAYPSHKFFMTQYVKDECRVRRWVYEDSVPLMMESNMKHMLRMASNRIAACQSDKATRCDMMKDLNEMTEILDGNF.

The segment at 1-213 (MTTAITPDKK…DQDDDDQKDL (213 aa)) is disordered. Composition is skewed to basic residues over residues 27 to 43 (TKPRRSSKTSKKRKSKK) and 50 to 78 (AKKRKTKRSKKSAKRTKRSAPKKAPKKAP). A compositionally biased stretch (polar residues) spans 90–100 (QQAQASLQKPI). The segment covering 116–134 (PRPPTPIPPTGVKPEPAPR) has biased composition (pro residues). Low complexity predominate over residues 143–158 (SVSSTTPRTSATTGTT).

This is an uncharacterized protein from Caenorhabditis elegans.